The chain runs to 356 residues: sn-glycerol-3-phosphate import ATP-binding protein UgpC (356 aa).

Residues 4–235 (LKLQAVTKSW…PASRFVASFI (232 aa)) form the ABC transporter domain. 37 to 44 (GPSGCGKS) contributes to the ATP binding site.

Belongs to the ABC transporter superfamily. sn-glycerol-3-phosphate importer (TC 3.A.1.1.3) family. The complex is composed of two ATP-binding proteins (UgpC), two transmembrane proteins (UgpA and UgpE) and a solute-binding protein (UgpB).

The protein localises to the cell inner membrane. It catalyses the reaction sn-glycerol 3-phosphate(out) + ATP + H2O = sn-glycerol 3-phosphate(in) + ADP + phosphate + H(+). In terms of biological role, part of the ABC transporter complex UgpBAEC involved in sn-glycerol-3-phosphate (G3P) import. Responsible for energy coupling to the transport system. The chain is sn-glycerol-3-phosphate import ATP-binding protein UgpC from Salmonella typhi.